The sequence spans 209 residues: LexA repressor (209 aa).

The segment at residues Arg-28–Lys-48 is a DNA-binding region (H-T-H motif). Catalysis depends on for autocatalytic cleavage activity residues Ser-126 and Lys-163.

This sequence belongs to the peptidase S24 family. As to quaternary structure, homodimer.

It carries out the reaction Hydrolysis of Ala-|-Gly bond in repressor LexA.. Functionally, represses a number of genes involved in the response to DNA damage (SOS response), including recA and lexA. In the presence of single-stranded DNA, RecA interacts with LexA causing an autocatalytic cleavage which disrupts the DNA-binding part of LexA, leading to derepression of the SOS regulon and eventually DNA repair. In Vibrio cholerae serotype O1 (strain ATCC 39541 / Classical Ogawa 395 / O395), this protein is LexA repressor.